We begin with the raw amino-acid sequence, 414 residues long: xyloglucan O-acetyltransferase 2 (414 aa).

The Cytoplasmic segment spans residues 1-26 (MKSSSSIFRETSEKKSERWMMMNIGR). A helical; Signal-anchor for type II membrane protein transmembrane segment spans residues 27 to 47 (FSPFFLSSFCITLFFTGFFVY). The Lumenal portion of the chain corresponds to 48-414 (QNPFKSIADQ…FLMAIIRQLR (367 aa)). 4 disulfides stabilise this stretch: C70-C120, C91-C156, C100-C394, and C317-C390. The N-linked (GlcNAc...) asparagine glycan is linked to N88. The GDS motif signature appears at 143-145 (GDS). S145 functions as the Nucleophile in the catalytic mechanism. N-linked (GlcNAc...) asparagine glycans are attached at residues N205, N263, and N308. D389 serves as the catalytic Proton donor. A DXXH motif motif is present at residues 389 to 392 (DCVH). H392 serves as the catalytic Proton acceptor.

Belongs to the PC-esterase family. TBL subfamily.

It is found in the membrane. Xyloglucan acetyltransferase that catalyzes the acetylation of fucosylated Gal residues on xyloglucan side chains. Predominantly catalyze 6-O-monoacetylation of Gal residues in the Fuc-Gal-Xyl trisaccharide side chains of xyloglucan oligomers. Involved in xyloglucan specific O-acetylation in seeds. The sequence is that of xyloglucan O-acetyltransferase 2 from Arabidopsis thaliana (Mouse-ear cress).